A 936-amino-acid chain; its full sequence is Protein NLP2 (936 aa).

Residues 99–130 (IMSVNPTEAEKTGKSSGELGSDDGAHQGSSMV) are disordered. In terms of domain architecture, RWP-RK spans 550–635 (QPSSIGHAEK…INSVHGVDRS (86 aa)). Disordered stretches follow at residues 666 to 697 (PSVG…SCQL), 753 to 782 (CTNP…IQQE), and 794 to 827 (DKDH…RSAL). Residues 671 to 682 (TVEENSDLKSEE) are compositionally biased toward basic and acidic residues. Positions 688 to 697 (DGSQRQSCQL) are enriched in polar residues. Positions 754–769 (TNPSSSLRPSSESTRN) are enriched in low complexity. The span at 770–781 (QIVGRNSPSIQQ) shows a compositional bias: polar residues. The span at 801-815 (STSGMTDSSSGSASS) shows a compositional bias: low complexity. A compositionally biased stretch (polar residues) spans 816 to 825 (HPTFKQNTRS). The PB1 domain occupies 834–916 (ALTVKATYNG…RIVKLQVRDL (83 aa)).

The protein resides in the nucleus. Probable transcription factor. The protein is Protein NLP2 of Oryza sativa subsp. japonica (Rice).